A 361-amino-acid polypeptide reads, in one-letter code: MESGHRFDAQTLHSFIQAVFRQMGSEEQEAKLVADHLIAANLAGHDSHGIGMIPSYVRSWSQGHLQINHHAKIVKEAGAAVTLDGDRAFGQVAAHEAMALGIEKAHQHGIAAVALHNSHHIGRIGYWAEQCAAAGFVSIHFVSVVGIPMVAPFHGRDSRFGTNPFCVVFPRKDDFPLLLDYATSAIAFGKTRVAWHKGVPVPPGCLIDVNGVPTTNPAVMQESPLGSLLTFAEHKGYALAAMCEILGGALSGGKTTHQETLQTSPDAILNCMTTIIINPELFGAPDCSAQTEAFAEWVKASPHDDDKPILLPGEWEVNTRRERQEQGIPLDAGSWQAICDAARQIGMPEETLQAFCQQLAS.

Residues His48, 122–124 (GRI), 178–182 (LLDYA), His234, Asn270, and 313–316 (GEWE) contribute to the NAD(+) site.

Belongs to the LDH2/MDH2 oxidoreductase family.

The enzyme catalyses 2-hydroxyglutarate + NADP(+) = 2-oxoglutarate + NADPH + H(+). The catalysed reaction is 2-hydroxyglutarate + NAD(+) = 2-oxoglutarate + NADH + H(+). It catalyses the reaction 3-phenyllactate + NADP(+) = 3-phenylpyruvate + NADPH + H(+). It carries out the reaction 3-phenyllactate + NAD(+) = 3-phenylpyruvate + NADH + H(+). The enzyme catalyses (2R)-2-hydroxy-3-(4-hydroxyphenyl)propanoate + NAD(+) = 3-(4-hydroxyphenyl)pyruvate + NADH + H(+). The catalysed reaction is (2R)-2-hydroxy-3-(4-hydroxyphenyl)propanoate + NADP(+) = 3-(4-hydroxyphenyl)pyruvate + NADPH + H(+). It catalyses the reaction (2R)-3-(3,4-dihydroxyphenyl)lactate + NADP(+) = 3-(3,4-dihydroxyphenyl)pyruvate + NADPH + H(+). It carries out the reaction (2R)-3-(3,4-dihydroxyphenyl)lactate + NAD(+) = 3-(3,4-dihydroxyphenyl)pyruvate + NADH + H(+). Functionally, catalyzes the NAD(P)H-dependent reduction of 2-oxoglutarate, phenylpyruvate and (4-hydroxyphenyl)pyruvate, leading to the respective 2-hydroxycarboxylate in vitro. Shows a preference for NADPH over NADH as a redox partner. Do not catalyze the reverse reactions. The protein is Hydroxycarboxylate dehydrogenase B of Escherichia coli O157:H7.